The chain runs to 673 residues: Translation factor GUF1 homolog, mitochondrial (673 aa).

The region spanning 68–260 (ERIRNFSIIA…AVIERIPSPP (193 aa)) is the tr-type G domain. GTP contacts are provided by residues 77–84 (AHVDHGKS), 153–157 (DTPGH), and 207–210 (NKID).

The protein belongs to the TRAFAC class translation factor GTPase superfamily. Classic translation factor GTPase family. LepA subfamily.

The protein localises to the mitochondrion inner membrane. The enzyme catalyses GTP + H2O = GDP + phosphate + H(+). Functionally, promotes mitochondrial protein synthesis. May act as a fidelity factor of the translation reaction, by catalyzing a one-codon backward translocation of tRNAs on improperly translocated ribosomes. Binds to mitochondrial ribosomes in a GTP-dependent manner. This is Translation factor GUF1 homolog, mitochondrial from Ricinus communis (Castor bean).